The chain runs to 148 residues: Small ribosomal subunit protein eS6 (148 aa).

Belongs to the eukaryotic ribosomal protein eS6 family.

The sequence is that of Small ribosomal subunit protein eS6 from Pyrobaculum arsenaticum (strain DSM 13514 / JCM 11321 / PZ6).